Consider the following 94-residue polypeptide: MKILLLTLVVVTIMCLDLGYTTKCYKTGERIISETCPPGQDLCYMKTWCDVFCGSRGRVIELGCTATCPTVKPHEQITCCSTDNCNPHPKMKQR.

Positions 1–21 (MKILLLTLVVVTIMCLDLGYT) are cleaved as a signal peptide. Intrachain disulfides connect C24/C43, C36/C64, C49/C53, C68/C79, and C80/C85.

Belongs to the three-finger toxin family. Long-chain subfamily. Type II alpha-neurotoxin sub-subfamily. Monomer. As to expression, expressed by the venom gland.

It localises to the secreted. Binds with high affinity to muscular (alpha-1/CHRNA1) and neuronal (alpha-7/CHRNA7) nicotinic acetylcholine receptor (nAChR) and inhibits acetylcholine from binding to the receptor, thereby impairing neuromuscular and neuronal transmission. Recombinant LNTX1 leads to a functional block of the muscle-type acetylcholine receptors. Has a cytotoxic activity. This chain is Long neurotoxin LNTX1, found in Ophiophagus hannah (King cobra).